A 3961-amino-acid chain; its full sequence is Replicase polyprotein 1ab (3961 aa).

Residues 8 to 28 (CTCTPNARVFVAEGQVYCTRC) form a C4-type; atypical zinc finger. The Peptidase C31 domain occupies 69–180 (ECSPTGACWL…EDFCPFECAM (112 aa)). Residues 69 to 182 (ECSPTGACWL…FCPFECAMAD (114 aa)) form a PCP1-alpha region. Residues cysteine 76 and histidine 146 each act as for Nsp1-alpha papain-like cysteine proteinase activity in the active site. Residues 199–200 (VS) are important for host EIF2AK2 inhibition. A PCP1-beta region spans residues 263-382 (DTVPEGNCWW…IFRFGSHKWY (120 aa)). Residues 263–383 (DTVPEGNCWW…FRFGSHKWYG (121 aa)) form the Peptidase C32 domain. Active-site for Nsp1-beta papain-like cysteine proteinase activity residues include cysteine 270 and histidine 339. Residues 426 to 513 (LKLYSPPAEG…GEHWTVSVNP (88 aa)) form an OTU-like region. Positions 428-535 (LYSPPAEGNC…QGCCEHKGGL (108 aa)) constitute a Peptidase C33 domain. Residues cysteine 437 and histidine 506 each act as for Nsp2 cysteine proteinase activity in the active site. Residues 810–819 (WTPPPPPPRV) show a composition bias toward pro residues. Disordered regions lie at residues 810–875 (WTPP…FPTP), 899–918 (TPLDGSAPVPAPRRTVSRPM), and 1148–1191 (TGEL…PADT). Transmembrane regions (helical) follow at residues 1266 to 1286 (FCLFLCYSYPFFGFAPLLGVF), 1296 to 1316 (GVFGCWLAFAVGLFKPVSDPV), 1368 to 1388 (VWHFLLRFGIVADCILAGAYV), 1583 to 1603 (LVAALHVACSMALHMLAGVYV), 1648 to 1668 (LTALVAGFGLQEIALVVLIFV), 1685 to 1705 (CILLAIASYVWVPLTWLLCVF), and 1719 to 1739 (ILWLVFFLISVNIPSGILAVV). An HD1 region spans residues 1266-1388 (FCLFLCYSYP…ADCILAGAYV (123 aa)). An HD2 region spans residues 1583–1745 (LVAALHVACS…LAVVLLVSLW (163 aa)). The Peptidase S32 domain occupies 1810–2013 (GAFRTQKPSL…ALLAAKPELE (204 aa)). Active-site charge relay system; for 3C-like serine proteinase activity residues include histidine 1848, aspartate 1873, and serine 1927. Helical transmembrane passes span 2036 to 2056 (WTPLVAVGFFILNEILPAVLV), 2060 to 2080 (FSFGMFVLSWLTPWSAQVLMI), 2092 to 2112 (LSLGFYSLGAVTSFVADLAVT), 2137 to 2157 (SPVPVIACGVVHLLAIILYLF), and 2162 to 2182 (LHYVLVGDGVFSSAFFLRYFA). Residues 2036–2157 (WTPLVAVGFF…HLLAIILYLF (122 aa)) form an HD3 region. Residues 2488-2651 (IIDKLQGLTK…LPYKLYPVRG (164 aa)) enclose the NiRAN domain. The RdRp catalytic domain occupies 2890-3024 (GRCLEADLAS…YAESPSMPNY (135 aa)). The AV ZBD domain maps to 3145 to 3208 (GKKSRMCGYC…PPLGKGTSPL (64 aa)). 12 residues coordinate Zn(2+): cysteine 3151, cysteine 3154, cysteine 3164, cysteine 3169, histidine 3172, histidine 3174, histidine 3176, histidine 3178, cysteine 3185, histidine 3187, cysteine 3194, and cysteine 3197. The (+)RNA virus helicase ATP-binding domain maps to 3265-3417 (ASTALLPTCK…VFDIMPQTQL (153 aa)). An ATP-binding site is contributed by 3293-3300 (GPPGAGKT). The region spanning 3418 to 3546 (KTIWRFGQNI…AVHRDEQLIV (129 aa)) is the (+)RNA virus helicase C-terminal domain. The 97-residue stretch at 3585–3681 (EGSSSPLPKV…LTKFVRGEAQ (97 aa)) folds into the AV-Nsp11N/CoV-Nsp15M domain. Positions 3683 to 3805 (LPETVFSTGR…MVWKGKTAYF (123 aa)) constitute a NendoU domain. Active-site residues include histidine 3714, histidine 3729, and lysine 3758.

This sequence belongs to the arteriviridae polyprotein family. As to quaternary structure, nsp1-alpha papain-like: Interacts with host RNF31. In terms of assembly, interacts with host EIF2AK2; this interaction occurs in host stress granules and leads to EIF2AK2 inhibition. Interacts with host G3BP1; this interaction probably plays a role in Nsp1-beta-mediated inhibition of host EIF2AK2. Interacts with host DDX18; this interaction redistributes host DDX18 to the cytoplasm. As to quaternary structure, interacts with host IFITM1. In terms of assembly, interacts with host DDX5. Interacts with host OTULIN. As to quaternary structure, interacts with host LGALS3. Post-translationally, specific enzymatic cleavages in vivo by its own proteases yield mature proteins. Nsp1 is autocleaved into two subunits, Nsp1-alpha and Nsp1-beta. There are two alternative pathways for processing. Either nsp4-5 is cleaved, which represents the major pathway or the nsp5-6 and nsp6-7 are processed, which represents the minor pathway. The major pathway occurs when nsp2 acts as a cofactor for nsp4.

It is found in the host nucleus. It localises to the host cytoplasm. The protein localises to the host membrane. The protein resides in the host endoplasmic reticulum. Its subcellular location is the host perinuclear region. The catalysed reaction is RNA(n) + a ribonucleoside 5'-triphosphate = RNA(n+1) + diphosphate. It catalyses the reaction ATP + H2O = ADP + phosphate + H(+). The enzyme catalyses Thiol-dependent hydrolysis of ester, thioester, amide, peptide and isopeptide bonds formed by the C-terminal Gly of ubiquitin (a 76-residue protein attached to proteins as an intracellular targeting signal).. It carries out the reaction uridylyl-uridylyl-ribonucleotide-RNA = a 3'-end uridylyl-2',3'-cyclophospho-uridine-RNA + a 5'-end dephospho-ribonucleoside-RNA. Functionally, contains the activities necessary for the transcription of negative stranded RNA, leader RNA, subgenomic mRNAs and progeny virion RNA as well as proteinases responsible for the cleavage of the polyprotein into functional products. In terms of biological role, inhibits host IFN-beta production. Plays a role in the degradation of the host transcriptional activator CREBBP protein. The degradation of host CREBBP which is a key component of the IFN enhanceosome is likely responsible for the inhibition of interferon mediated by Nsp1-alpha. Also participates in the inhibition of host NF-kappa-B activation by counteracting LUBAC-dependent induction of NF-kappa-B. Reduces host NEMO ubiquitination by blocking the interaction between the two LUBAC complex components RNF31 and SHARPIN. Plays a role in blocking host mRNA nuclear export to the cytoplasm and subversion of host protein synthesis. Additionally, inhibits the interferon-activated JAK/STAT signal transduction by mediating the ubiquitination and subsequent proteasomal degradation of host KPNA1. Repurposes the host antiviral stress granules into a proviral platform to counteract the EIF2AK2/PKR restriction, thereby regulating the host inflammatory response. Its function is as follows. Multifunctional protein that acts as a viral protease and as a viral antagonist of host immune response. Cleaves the nsp2/nsp3 site in the viral polyprotein. Displays deubiquitinating activity that cleaves both ubiquitinated and ISGylated products and therefore inhibits ubiquitin and ISG15-dependent host innate immunity. Also deubiquinates host NFKBIA, thereby interfering with NFKBIA degradation and impairing subsequent NF-kappa-B activation. Functionally, plays a role in the inhibition of the immune response by interacting with host IFITM1. This interaction leads to the proteasomal degradation of the IFN-induced antiviral protein IFITM1. In terms of biological role, cleaves the majority of cleavage sites present in the C-terminus of the polyprotein. Triggers host apoptosis through caspase-3, -8, and -9 activations. Subverts host innate immune responses through its protease activity. Targets the NF-kappa-B essential modulator NEMO and mediates its cleavage. Blocks host interferon beta induction and downstream signaling by cleaving mitochondrial MAVS, dislodging it from the mitochondria. Impairs host defense by cleaving host mRNA-decapping enzyme DCP1A to attenuate its antiviral activity. Plays a role in the initial induction of autophagosomes from host endoplasmic reticulum. Its function is as follows. Plays a role in the inhibition of host STAT3 signaling pathway by inducing the degradation of STAT3. Functionally, responsible for replication and transcription of the viral RNA genome. In terms of biological role, displays RNA and DNA duplex-unwinding activities with 5' to 3' polarity. Plays a role in viral transcription/replication and prevents the simultaneous activation of host cell dsRNA sensors, such as MDA5/IFIH1, OAS, PKR and NLRP3 inflammasome. Acts by degrading the 5'-polyuridines generated during replication of the poly(A) region of viral genomic and subgenomic RNAs. Catalyzes a two-step reaction in which a 2'3'-cyclic phosphate (2'3'-cP) is first generated by 2'-O transesterification, which is then hydrolyzed to a 3'-phosphate (3'-P). If not degraded, poly(U) RNA would hybridize with poly(A) RNA tails and activate host dsRNA sensors. Also plays a role in the inhibition of host type I interferon production by recruiting host OTULIN to promote removal of linear ubiquitination targeting host NEMO. This is Replicase polyprotein 1ab (rep) from Porcine reproductive and respiratory syndrome virus (strain HB-1) (PRRSV).